We begin with the raw amino-acid sequence, 287 residues long: Succinate--CoA ligase [ADP-forming] subunit alpha 2 (287 aa).

CoA is bound by residues 17 to 20, Lys43, and 96 to 98; these read TGYQ and ITE. Position 159 (Tyr159) interacts with substrate. The Tele-phosphohistidine intermediate role is filled by His246.

Belongs to the succinate/malate CoA ligase alpha subunit family. As to quaternary structure, heterotetramer of two alpha and two beta subunits.

It catalyses the reaction succinate + ATP + CoA = succinyl-CoA + ADP + phosphate. The enzyme catalyses GTP + succinate + CoA = succinyl-CoA + GDP + phosphate. It functions in the pathway carbohydrate metabolism; tricarboxylic acid cycle; succinate from succinyl-CoA (ligase route): step 1/1. Functionally, succinyl-CoA synthetase functions in the citric acid cycle (TCA), coupling the hydrolysis of succinyl-CoA to the synthesis of either ATP or GTP and thus represents the only step of substrate-level phosphorylation in the TCA. The alpha subunit of the enzyme binds the substrates coenzyme A and phosphate, while succinate binding and nucleotide specificity is provided by the beta subunit. The chain is Succinate--CoA ligase [ADP-forming] subunit alpha 2 from Archaeoglobus fulgidus (strain ATCC 49558 / DSM 4304 / JCM 9628 / NBRC 100126 / VC-16).